The sequence spans 183 residues: Ribosome rescue factor SmrB (183 aa).

Residues 98–173 (LDLHGLTQLQ…GDAALLVLIE (76 aa)) form the Smr domain.

The protein belongs to the SmrB family. Associates with collided ribosomes, but not with correctly translating polysomes.

In terms of biological role, acts as a ribosome collision sensor. Detects stalled/collided disomes (pairs of ribosomes where the leading ribosome is stalled and a second ribosome has collided with it) and endonucleolytically cleaves mRNA at the 5' boundary of the stalled ribosome. Stalled/collided disomes form a new interface (primarily via the 30S subunits) that binds SmrB. Cleaved mRNA becomes available for tmRNA ligation, leading to ribosomal subunit dissociation and rescue of stalled ribosomes. The protein is Ribosome rescue factor SmrB of Escherichia fergusonii (strain ATCC 35469 / DSM 13698 / CCUG 18766 / IAM 14443 / JCM 21226 / LMG 7866 / NBRC 102419 / NCTC 12128 / CDC 0568-73).